The primary structure comprises 69 residues: uncharacterized protein (69 aa).

A disordered region spans residues 23-46; the sequence is AENEGNRKENRRQMQSRNERGCNV. A compositionally biased stretch (basic and acidic residues) spans 26–44; it reads EGNRKENRRQMQSRNERGC.

This is an uncharacterized protein from Homo sapiens (Human).